A 379-amino-acid chain; its full sequence is UDP-4-amino-4-deoxy-L-arabinose--oxoglutarate aminotransferase (379 aa).

Lys-182 bears the N6-(pyridoxal phosphate)lysine mark.

This sequence belongs to the DegT/DnrJ/EryC1 family. ArnB subfamily. In terms of assembly, homodimer. Pyridoxal 5'-phosphate is required as a cofactor.

The enzyme catalyses UDP-4-amino-4-deoxy-beta-L-arabinose + 2-oxoglutarate = UDP-beta-L-threo-pentopyranos-4-ulose + L-glutamate. It participates in nucleotide-sugar biosynthesis; UDP-4-deoxy-4-formamido-beta-L-arabinose biosynthesis; UDP-4-deoxy-4-formamido-beta-L-arabinose from UDP-alpha-D-glucuronate: step 2/3. The protein operates within bacterial outer membrane biogenesis; lipopolysaccharide biosynthesis. Catalyzes the conversion of UDP-4-keto-arabinose (UDP-Ara4O) to UDP-4-amino-4-deoxy-L-arabinose (UDP-L-Ara4N). The modified arabinose is attached to lipid A and is required for resistance to polymyxin and cationic antimicrobial peptides. In Shigella flexneri, this protein is UDP-4-amino-4-deoxy-L-arabinose--oxoglutarate aminotransferase.